We begin with the raw amino-acid sequence, 227 residues long: Uracil-DNA glycosylase (227 aa).

Asp68 (proton acceptor) is an active-site residue.

The protein belongs to the uracil-DNA glycosylase (UDG) superfamily. UNG family.

The protein localises to the cytoplasm. The catalysed reaction is Hydrolyzes single-stranded DNA or mismatched double-stranded DNA and polynucleotides, releasing free uracil.. Its function is as follows. Excises uracil residues from the DNA which can arise as a result of misincorporation of dUMP residues by DNA polymerase or due to deamination of cytosine. The sequence is that of Uracil-DNA glycosylase from Mycobacterium avium (strain 104).